The primary structure comprises 280 residues: MSFRLDAASVSYANGQRALSQITLAASRGEPIAVIGPSGAGKTSLLRLLATSLRPSEGRVEVLEQSPWAVSAARLQQLRCRIGMVHQAPPMPPRQRVVTAILAGRLGIWPAWKSLLSLVYPADIDGAGEQLARLELADRLFDRCDQLSGGQLQRVGVARVLYQRPELILADEPVSAMDPVLANLTLGELRREADTRAVPLVASLHAVDLALRWFPRIVGLKAGEIAFDLPAERVTDALLRELYASESASPPVQGSQALTSIAAGASAAIGGDTQPRPACR.

The 245-residue stretch at 3–247 folds into the ABC transporter domain; it reads FRLDAASVSY…LLRELYASES (245 aa). 36–43 is a binding site for ATP; sequence GPSGAGKT.

It belongs to the ABC transporter superfamily. Phosphonates importer (TC 3.A.1.9.1) family. The complex is composed of two ATP-binding proteins (PhnC), two transmembrane proteins (PhnE) and a solute-binding protein (PhnD).

Its subcellular location is the cell inner membrane. It carries out the reaction phosphonate(out) + ATP + H2O = phosphonate(in) + ADP + phosphate + H(+). Functionally, part of the ABC transporter complex PhnCDE involved in phosphonates import. Responsible for energy coupling to the transport system. This is Phosphonates import ATP-binding protein PhnC 1 from Cupriavidus necator (strain ATCC 17699 / DSM 428 / KCTC 22496 / NCIMB 10442 / H16 / Stanier 337) (Ralstonia eutropha).